We begin with the raw amino-acid sequence, 316 residues long: Ribosomal RNA small subunit methyltransferase H (316 aa).

S-adenosyl-L-methionine-binding positions include 32-34 (AGH), Asp-52, Phe-79, Asp-100, and Gln-107.

It belongs to the methyltransferase superfamily. RsmH family.

It is found in the cytoplasm. The catalysed reaction is cytidine(1402) in 16S rRNA + S-adenosyl-L-methionine = N(4)-methylcytidine(1402) in 16S rRNA + S-adenosyl-L-homocysteine + H(+). Its function is as follows. Specifically methylates the N4 position of cytidine in position 1402 (C1402) of 16S rRNA. The sequence is that of Ribosomal RNA small subunit methyltransferase H from Lysinibacillus sphaericus (strain C3-41).